We begin with the raw amino-acid sequence, 208 residues long: V-type ATP synthase subunit D (208 aa).

This sequence belongs to the V-ATPase D subunit family.

Functionally, produces ATP from ADP in the presence of a proton gradient across the membrane. The protein is V-type ATP synthase subunit D of Chlamydia felis (strain Fe/C-56) (Chlamydophila felis).